The following is a 177-amino-acid chain: Interleukin-1 receptor antagonist protein (177 aa).

Positions 1-25 (MEVSRYLCSYLISFLLFLFHSETAC) are cleaved as a signal peptide. C91 and C141 are disulfide-bonded. N109 carries an N-linked (GlcNAc...) asparagine glycan.

Belongs to the IL-1 family.

It localises to the secreted. In terms of biological role, anti-inflammatory antagonist of interleukin-1 family of proinflammatory cytokines such as interleukin-1beta/IL1B and interleukin-1alpha/IL1A. Protects from immune dysregulation and uncontrolled systemic inflammation triggered by IL1 for a range of innate stimulatory agents such as pathogens. The protein is Interleukin-1 receptor antagonist protein (IL1RN) of Sus scrofa (Pig).